Reading from the N-terminus, the 632-residue chain is MHGLLLAGLAVALPLGVAGHPARPQTALSPRGIDVNAYRFTSTAKYNEHKTTSQMVQSFAYSKDDDYVATATKLVKSTFPNMTFRTVKDHYIGTNGIGHVHFKQTAHDIDIDNADFNVNIGRDGKVFTFGNSFYQGEMPKTNPMVKRDYSDPVKALHGAIKTLKIPVKPESAKAMPMDEVETFKFEGTSGALSEPKAKLVYIQKDGNLHLTWRVETDVGDNWLLSYVDSKESETVHNVVDYVASADYKVFAFGLNDPTEGQPSMIKDPWNTTGSGSPFTWHGDGKTDYTVTRGNNVAAQDNPSGGSQWENNYRPDSPQLSFVYDYSDQMEPEDYKDFAITQLFYTTNTFHDVLYSLGFTEEAGNFQVNNGNKGGKGNDFAICNAQDGSGTNNANFATPPDGQPGRMRMYTWTTSKPKRDGDLEAGIVIHEYTHGLSNRLCGGPANSNCLNDLEAGGMGEGWGDFYATAIRLKQGDTHDTDYTMGEWAANQKGGIREYPYSTNMQTNPYTYADVKGMREVHGIGTVWATILYDVLWNLIDDHGMGKNVMPKMVDGVPTDGRTLAMKLVLDGMTLMPCNPNFMQARDAIIDADMALTKGANKCSLMKAFAKRGLGSNTKPGKGYTNNFDMPSGC.

Positions 1–19 are cleaved as a signal peptide; that stretch reads MHGLLLAGLAVALPLGVAG. Residues 20–244 constitute a propeptide that is removed on maturation; sequence HPARPQTALS…VHNVVDYVAS (225 aa). Asn-270 is a glycosylation site (N-linked (GlcNAc...) asparagine). Polar residues predominate over residues 294-310; the sequence is NNVAAQDNPSGGSQWEN. A disordered region spans residues 294–313; that stretch reads NNVAAQDNPSGGSQWENNYR. His-429 lines the Zn(2+) pocket. Glu-430 is an active-site residue. Position 433 (His-433) interacts with Zn(2+).

This sequence belongs to the peptidase M36 family. The cofactor is Zn(2+).

It localises to the secreted. Its function is as follows. Secreted metalloproteinase probably acting as a virulence factor. The polypeptide is Extracellular metalloproteinase 2 (MEP2) (Arthroderma otae (Microsporum canis)).